The following is a 280-amino-acid chain: MKDVYFMERDPYAPIRHCYGISKILYEGKSKYQEIQVVESHYFGKILILDGVVQFTEKNEFFYHEMLTHPVMFAHKNPQNVLIIGGGDGGILREVLKHKSVKKAVLVDIDKDVVEVSKKFFPTVACSMDDPRAIILNEDGFKYIQDYKNEFDVIIVDSTDPVGFAHVLTTEEFFKYVFEALKEDGIYVGQSESLHYHLDIVVRFQKALKKSFPIVDLYTTVIPVYAGYWWSFSVGSKVYNPREISREVDVETRFYSDEIHKNAFLPPNFYQKILNGNFKY.

The PABS domain maps to 3-237 (DVYFMERDPY…YWWSFSVGSK (235 aa)). Gln-33 is a binding site for S-methyl-5'-thioadenosine. 2 residues coordinate spermidine: His-64 and Asp-88. Residues Asp-108 and 139–140 (DG) contribute to the S-methyl-5'-thioadenosine site. The active-site Proton acceptor is Asp-157. Position 157–160 (157–160 (DSTD)) interacts with spermidine.

The protein belongs to the spermidine/spermine synthase family. In terms of assembly, homodimer or homotetramer.

The protein resides in the cytoplasm. It catalyses the reaction S-adenosyl 3-(methylsulfanyl)propylamine + putrescine = S-methyl-5'-thioadenosine + spermidine + H(+). It participates in amine and polyamine biosynthesis; spermidine biosynthesis; spermidine from putrescine: step 1/1. Catalyzes the irreversible transfer of a propylamine group from the amino donor S-adenosylmethioninamine (decarboxy-AdoMet) to putrescine (1,4-diaminobutane) to yield spermidine. The protein is Polyamine aminopropyltransferase of Hydrogenobaculum sp. (strain Y04AAS1).